Consider the following 545-residue polypeptide: Chaperonin GroEL (545 aa).

ATP-binding positions include 31-34, 88-92, Gly-415, 478-480, and Asp-494; these read TLGP, DGTTT, and NAA.

The protein belongs to the chaperonin (HSP60) family. As to quaternary structure, forms a cylinder of 14 subunits composed of two heptameric rings stacked back-to-back. Interacts with the co-chaperonin GroES.

Its subcellular location is the cytoplasm. The catalysed reaction is ATP + H2O + a folded polypeptide = ADP + phosphate + an unfolded polypeptide.. Functionally, together with its co-chaperonin GroES, plays an essential role in assisting protein folding. The GroEL-GroES system forms a nano-cage that allows encapsulation of the non-native substrate proteins and provides a physical environment optimized to promote and accelerate protein folding. This Streptococcus pyogenes serotype M4 (strain MGAS10750) protein is Chaperonin GroEL.